The sequence spans 438 residues: Glutamyl-tRNA(Gln) amidotransferase subunit D (438 aa).

Residues 91 to 421 (KNLSILSTGG…SEIYEIMKTN (331 aa)) form the Asparaginase/glutaminase domain. Residues T101, T177, D178, and K254 contribute to the active site.

Belongs to the asparaginase 1 family. GatD subfamily. Heterodimer of GatD and GatE.

The catalysed reaction is L-glutamyl-tRNA(Gln) + L-glutamine + ATP + H2O = L-glutaminyl-tRNA(Gln) + L-glutamate + ADP + phosphate + H(+). In terms of biological role, allows the formation of correctly charged Gln-tRNA(Gln) through the transamidation of misacylated Glu-tRNA(Gln) in organisms which lack glutaminyl-tRNA synthetase. The reaction takes place in the presence of glutamine and ATP through an activated gamma-phospho-Glu-tRNA(Gln). The GatDE system is specific for glutamate and does not act on aspartate. The protein is Glutamyl-tRNA(Gln) amidotransferase subunit D of Methanosphaera stadtmanae (strain ATCC 43021 / DSM 3091 / JCM 11832 / MCB-3).